Here is a 133-residue protein sequence, read N- to C-terminus: uncharacterized protein (133 aa).

Residues 82-133 are disordered; that stretch reads KIKSYSPSRSQKALNNPSKIRTKQTNNDTTIQQSNNTTSTNTKPSSNTNTQQ. The segment covering 86 to 100 has biased composition (polar residues); the sequence is YSPSRSQKALNNPSK. A compositionally biased stretch (low complexity) spans 105-133; the sequence is QTNNDTTIQQSNNTTSTNTKPSSNTNTQQ.

This is an uncharacterized protein from Acidianus convivator (ABV).